The following is a 385-amino-acid chain: MGRWCQTVARGQRPRTSAPSRAGALLLLLLLLRSAGCWGAGEAPGALSTADPADQSVQCVPKATCPSSRPRLLWQTPTTQTLPSTTMETQFPVSEGKVDPYRSCGFSYEQDPTLRDPEAVARRWPWMVSVRANGTHICAGTIIASQWVLTVAHCLIWRDVIYSVRVGSPWIDQMTQTASDVPVLQVIMHSRYRAQRFWSWVGQANDIGLLKLKQELKYSNYVRPICLPGTDYVLKDHSRCTVTGWGLSKADGMWPQFRTIQEKEVIILNNKECDNFYHNFTKIPTLVQIIKSQMMCAEDTHREKFCYELTGEPLVCSMEGTWYLVGLVSWGAGCQKSEAPPIYLQVSSYQHWIWDCLNGQALALPAPSRTLLLALPLPLSLLAAL.

An N-terminal signal peptide occupies residues 1–39; that stretch reads MGRWCQTVARGQRPRTSAPSRAGALLLLLLLLRSAGCWG. Residues 93–358 enclose the Peptidase S1 domain; that stretch reads VSEGKVDPYR…YQHWIWDCLN (266 aa). N-linked (GlcNAc...) asparagine glycosylation is present at asparagine 133. A disulfide bond links cysteine 138 and cysteine 154. Active-site charge relay system residues include histidine 153 and aspartate 206. Cystine bridges form between cysteine 240–cysteine 316, cysteine 273–cysteine 296, and cysteine 306–cysteine 334. Asparagine 279 carries an N-linked (GlcNAc...) asparagine glycan. The active-site Charge relay system is the threonine 310.

Belongs to the peptidase S1 family. Testis specific. Differentially expressed in some breast cancer tissues.

It is found in the endoplasmic reticulum. May be involved in proteolysis through its threonine endopeptidase activity. This chain is Probable threonine protease PRSS50 (PRSS50), found in Homo sapiens (Human).